A 144-amino-acid chain; its full sequence is Universal stress protein A homolog 1 (144 aa).

The protein belongs to the universal stress protein A family. In terms of assembly, homodimer.

It localises to the cytoplasm. Involved in stress response. This is Universal stress protein A homolog 1 (uspA1) from Coxiella burnetii (strain RSA 493 / Nine Mile phase I).